A 230-amino-acid polypeptide reads, in one-letter code: Ribosomal RNA small subunit methyltransferase G (230 aa).

Residues G74, F79, 124–125 (AE), and R141 contribute to the S-adenosyl-L-methionine site.

Belongs to the methyltransferase superfamily. RNA methyltransferase RsmG family.

The protein resides in the cytoplasm. Specifically methylates the N7 position of a guanine in 16S rRNA. This is Ribosomal RNA small subunit methyltransferase G from Acholeplasma laidlawii (strain PG-8A).